Consider the following 63-residue polypeptide: Cecropin-2 (63 aa).

The signal sequence occupies residues 1 to 23 (MNFYKVFIFVALILAISLGQSEA). Arg62 bears the Arginine amide mark.

It belongs to the cecropin family.

It is found in the secreted. Functionally, cecropins have lytic and antibacterial activity against several Gram-positive and Gram-negative bacteria. This is Cecropin-2 (Cec2A) from Drosophila virilis (Fruit fly).